Reading from the N-terminus, the 117-residue chain is Ribosome-binding factor A (117 aa).

This sequence belongs to the RbfA family. In terms of assembly, monomer. Binds 30S ribosomal subunits, but not 50S ribosomal subunits or 70S ribosomes.

The protein localises to the cytoplasm. Its function is as follows. One of several proteins that assist in the late maturation steps of the functional core of the 30S ribosomal subunit. Associates with free 30S ribosomal subunits (but not with 30S subunits that are part of 70S ribosomes or polysomes). Required for efficient processing of 16S rRNA. May interact with the 5'-terminal helix region of 16S rRNA. The sequence is that of Ribosome-binding factor A from Streptococcus suis (strain 98HAH33).